A 344-amino-acid chain; its full sequence is Cyclin-G2 (344 aa).

The segment at 298–324 (CFDGSESEDSGEDMSCGEESLSSSPPS) is disordered. A compositionally biased stretch (acidic residues) spans 302–313 (SESEDSGEDMSC).

The protein belongs to the cyclin family. Cyclin G subfamily. As to expression, highest levels in intestine. Intermediate levels in spleen, brain and kidney. Low levels in testis, stomach, pancreas, liver, salivary gland and muscle. According to PubMed:9139721 also abundant in thymus.

The protein localises to the cytoplasm. The protein resides in the nucleus. Its function is as follows. May play a role in growth regulation and in negative regulation of cell cycle progression. The protein is Cyclin-G2 (Ccng2) of Mus musculus (Mouse).